We begin with the raw amino-acid sequence, 199 residues long: Shikimate kinase (199 aa).

G14–T19 contributes to the ATP binding site. S18 is a Mg(2+) binding site. Substrate contacts are provided by D36, R60, and G82. R120 serves as a coordination point for ATP. R147 serves as a coordination point for substrate. The segment at Y179–K199 is disordered.

Belongs to the shikimate kinase family. As to quaternary structure, monomer. The cofactor is Mg(2+).

It localises to the cytoplasm. The enzyme catalyses shikimate + ATP = 3-phosphoshikimate + ADP + H(+). Its pathway is metabolic intermediate biosynthesis; chorismate biosynthesis; chorismate from D-erythrose 4-phosphate and phosphoenolpyruvate: step 5/7. Functionally, catalyzes the specific phosphorylation of the 3-hydroxyl group of shikimic acid using ATP as a cosubstrate. This is Shikimate kinase from Chlorobium phaeobacteroides (strain BS1).